The sequence spans 428 residues: Adenylosuccinate synthetase (428 aa).

Residues 12 to 18 and 40 to 42 each bind GTP; these read GDEGKGK and GHT. Asp13 (proton acceptor) is an active-site residue. Residues Asp13 and Gly40 each contribute to the Mg(2+) site. IMP contacts are provided by residues 13–16, 38–41, Thr130, Arg144, Gln225, Thr240, and Arg304; these read DEGK and NAGH. Catalysis depends on His41, which acts as the Proton donor. 300 to 306 is a binding site for substrate; sequence VTTGRAR. GTP-binding positions include Arg306, 332–334, and 414–416; these read KID and SVG.

The protein belongs to the adenylosuccinate synthetase family. As to quaternary structure, homodimer. Requires Mg(2+) as cofactor.

The protein resides in the cytoplasm. The enzyme catalyses IMP + L-aspartate + GTP = N(6)-(1,2-dicarboxyethyl)-AMP + GDP + phosphate + 2 H(+). It participates in purine metabolism; AMP biosynthesis via de novo pathway; AMP from IMP: step 1/2. In terms of biological role, plays an important role in the de novo pathway of purine nucleotide biosynthesis. Catalyzes the first committed step in the biosynthesis of AMP from IMP. This chain is Adenylosuccinate synthetase, found in Clostridium botulinum (strain ATCC 19397 / Type A).